The following is an 868-amino-acid chain: Phospholipase D delta (868 aa).

One can recognise a C2 domain in the interval 1 to 154 (MAEKVSEDVM…ASGERISGWF (154 aa)). Asp216 is a Ca(2+) binding site. In terms of domain architecture, PLD phosphodiesterase 1 spans 368–403 (TLFTHHQKCVLVDTQAVGNNRKVTAFIGGLDLCDGR). Catalysis depends on residues His373, Lys375, and Asp380. An a 1,2-diacyl-sn-glycero-3-phosphate-binding site is contributed by His373. Ca(2+) is bound by residues His409 and His440. Residues Gln588 and His718 each coordinate a 1,2-diacyl-sn-glycero-3-phosphate. Positions 713–740 (FMIYVHAKGMIVDDEYVLMGSANINQRS) constitute a PLD phosphodiesterase 2 domain. Residues His718, Lys720, and Asp725 contribute to the active site. Glu781 provides a ligand contact to Ca(2+).

The protein belongs to the phospholipase D family. C2-PLD subfamily. In terms of assembly, interacts with GAPC1 and GAPC2. Increased interaction in the presence of H(2)O(2). It depends on Ca(2+) as a cofactor. Expressed in roots, leaves, stems, siliques and flowers. Strongly expressed in the vascular tissues of cotyledons and leaves under dehydration stress conditions. Expression is higher in old leaves than in young leaves. Expressed in leaves and guard cells. The isoform 2 may not be present in siliques.

It localises to the cell membrane. It carries out the reaction a 1,2-diacyl-sn-glycero-3-phosphocholine + H2O = a 1,2-diacyl-sn-glycero-3-phosphate + choline + H(+). With respect to regulation, activated by free oleic acid in a dose-dependent manner and less effectively by other unsaturated fatty acids such as linoleic and linolenic acids. Not activated by the saturated fatty acids stearic and palmitic acids. PIP2 and Ca(2+) stimulate activity by promoting lipid substrate binding to the active site. Activated by H(2)O(2) and by binding to GAPC. Hydrolyzes glycerol-phospholipids at the terminal phosphodiesteric bond to generate phosphatidic acids (PA). May be involved in PA accumulation in the dehydration stress response and in the transduction of hormonal and environmental signals to the microtubules cytoskeleton. Prefers phosphatidylethanolamine to phosphatidylcholine as substrate. Involved in H(2)O(2) and abscisic acid (ABA)-induced stomatal closure. Involved in nitric oxide (NO) signaling during stomatal closure. Plays a positive role in ABA-promoted senescence. Involved in basal defense and nonhost resistance. This is Phospholipase D delta from Arabidopsis thaliana (Mouse-ear cress).